Reading from the N-terminus, the 476-residue chain is Protein transport protein Sec61 subunit alpha isoform 2 (476 aa).

Residues 1-33 (MGIKFLEVIKPFCAVLPEIQKPERKIQFREKVL) lie on the Cytoplasmic side of the membrane. Residues 34-53 (WTAITLFIFLVCCQIPLFGI) traverse the membrane as a helical segment. At 54 to 76 (MSSDSADPFYWMRVILASNRGTL) the chain is on the lumenal side. Residues 77–96 (MELGISPIVTSGLIMQLLAG) traverse the membrane as a helical segment. Topologically, residues 97 to 117 (AKIIEVGDTPKDRALFNGAQK) are cytoplasmic. A helical membrane pass occupies residues 118–138 (LFGMIITIGQAIVYVMTGMYG). At 139–144 (DPAEMG) the chain is on the lumenal side. The chain crosses the membrane as a helical span at residues 145 to 165 (AGICLLIIIQLFVAGLIVLLL). Topologically, residues 166-172 (DELLQKG) are cytoplasmic. The chain crosses the membrane as a helical span at residues 173–193 (YGLGSGISLFIATNICETIVW). Topologically, residues 194–240 (KAFSPTTINTGRGTEFEGAVIALFHLLATRTDKVRALREAFYRQNLP) are lumenal. The chain crosses the membrane as a helical span at residues 241–261 (NLMNLIATVFVFAVVIYFQGF). Topologically, residues 262 to 288 (RVDLPIKSARYRGQYSSYPIKLFYTSN) are cytoplasmic. A helical membrane pass occupies residues 289-309 (IPIILQSALVSNLYVISQMLS). The Lumenal segment spans residues 310–354 (VRFSGNFLVNLLGQWADVSGGGPARSYPVGGLCYYLSPPESMGAI). Residues 355-375 (FEDPVHVVVYIIFMLGSCAFF) form a helical membrane-spanning segment. The Cytoplasmic segment spans residues 376–420 (SKTWIEVSGSSAKDVAKQLKEQQMVMRGHRDTSMVHELNRYIPTA). A helical membrane pass occupies residues 421 to 441 (AAFGGLCIGALSVLADFLGAI). The Lumenal segment spans residues 442–445 (GSGT). The chain crosses the membrane as a helical span at residues 446 to 462 (GILLAVTIIYQYFEIFV). At 463 to 476 (KEQAEVGGMGALFF) the chain is on the cytoplasmic side.

Belongs to the SecY/SEC61-alpha family. In terms of assembly, the SEC61 channel-forming translocon complex consists of channel-forming core components SEC61A1, SEC61B and SEC61G and different auxiliary components such as SEC62 and SEC63.

It localises to the endoplasmic reticulum membrane. Its function is as follows. Component of SEC61 channel-forming translocon complex that mediates transport of signal peptide-containing precursor polypeptides across the endoplasmic reticulum (ER). Forms a ribosome receptor and a gated pore in the ER membrane, both functions required for cotranslational translocation of nascent polypeptides. The chain is Protein transport protein Sec61 subunit alpha isoform 2 (SEC61A2) from Homo sapiens (Human).